The primary structure comprises 512 residues: Glucose-1-phosphate adenylyltransferase small subunit 2, chloroplastic (512 aa).

The tract at residues 1–21 (MAAIGVLKVPPSSSSSSSSSS) is disordered. A chloroplast-targeting transit peptide spans 1–63 (MAAIGVLKVP…RNPFIVSPKA (63 aa)). The span at 12–21 (SSSSSSSSSS) shows a compositional bias: low complexity.

It belongs to the bacterial/plant glucose-1-phosphate adenylyltransferase family. Heterotetramer. As to expression, leaves and seeds.

The protein localises to the plastid. It is found in the chloroplast. It catalyses the reaction alpha-D-glucose 1-phosphate + ATP + H(+) = ADP-alpha-D-glucose + diphosphate. It functions in the pathway glycan biosynthesis; starch biosynthesis. Its activity is regulated as follows. Activated by 3'phosphoglycerate, inhibited by orthophosphate. Allosteric regulation. This protein plays a role in synthesis of starch. It catalyzes the synthesis of the activated glycosyl donor, ADP-glucose from Glc-1-P and ATP. This is Glucose-1-phosphate adenylyltransferase small subunit 2, chloroplastic (AGPP) from Vicia faba (Broad bean).